We begin with the raw amino-acid sequence, 541 residues long: Serine/threonine-protein kinase akt-1 (541 aa).

Residues 15–118 form the PH domain; the sequence is DVVIEGWLHK…WIHAIESISK (104 aa). In terms of domain architecture, Protein kinase spans 193–450; the sequence is FDFLKVLGKG…ALEICRADFF (258 aa). Residues 199–207 and Lys222 each bind ATP; that span reads LGKGTFGKV. Asp316 (proton acceptor) is an active-site residue. Residue Thr350 is modified to Phosphothreonine. An AGC-kinase C-terminal domain is found at 451 to 528; that stretch reads RTVDWEATYR…HNVMGSINRI (78 aa). Residue Ser517 is modified to Phosphoserine.

Belongs to the protein kinase superfamily. AGC Ser/Thr protein kinase family. RAC subfamily. In terms of assembly, interacts with pdk-1, sgk-1, akt-2 and daf-16. Part of a complex containing sgk-1, akt-1 and akt-2. Interacts with cmd-1 in the presence of Ca(2+). Interacts with let-92 phosphatase regulatory subunit pptr-1. It depends on Mg(2+) as a cofactor. Expressed in neurons, muscle cells of the pharynx, rectal gland cells, vulva and spermatheca.

It catalyses the reaction L-seryl-[protein] + ATP = O-phospho-L-seryl-[protein] + ADP + H(+). It carries out the reaction L-threonyl-[protein] + ATP = O-phospho-L-threonyl-[protein] + ADP + H(+). Its activity is regulated as follows. Phosphorylated and activated by pdk-1. Functionally, acts downstream of PI3 kinase age-1 and kinase pdk-1 in the daf-2/insulin receptor-like transduction pathway. Phosphorylates Forkhead-related daf-16 and the longevity-promoting skn-1 transcription factors, which inhibits their entry into the nucleus and antagonizes their functions. Plays a role in maintaining the gonadal basement membrane through it's role in inhibiting daf-16 activity. Has an essential role in regulating developmental arrest at the dauer stage. Plays a role in immune function and pathogen resistance. Regulates salt chemotaxis learning. Downstream of age-1 and together with akt-2 and sgk-1, promotes cell survival during embryonic development. The protein is Serine/threonine-protein kinase akt-1 of Caenorhabditis elegans.